Here is a 155-residue protein sequence, read N- to C-terminus: uncharacterized protein (155 aa).

One can recognise an SCP domain in the interval 37-140 (IAELRKKLNL…GGYRLKTTDN (104 aa)).

This is an uncharacterized protein from Borreliella burgdorferi (strain ATCC 35210 / DSM 4680 / CIP 102532 / B31) (Borrelia burgdorferi).